A 99-amino-acid chain; its full sequence is Transcription and mRNA export factor SUS1 (99 aa).

The protein belongs to the ENY2 family. In terms of assembly, component of the nuclear pore complex (NPC)-associated TREX-2 complex (transcription and export complex 2), composed of at least SUS1, SAC3, THP1, SEM1, and CDC31. TREX-2 contains 2 SUS1 chains. The TREX-2 complex interacts with the nucleoporin NUP1. Component of the 1.8 MDa SAGA transcription coactivator-HAT complex. SAGA is built of 5 distinct domains with specialized functions. Within the SAGA complex, SUS1, SGF11, SGF73 and UBP8 form an additional subcomplex of SAGA called the DUB module (deubiquitination module). Interacts directly with THP1, SAC3, SGF11, and with the RNA polymerase II.

The protein resides in the nucleus. It is found in the nucleoplasm. The protein localises to the cytoplasm. It localises to the P-body. Functionally, involved in mRNA export coupled transcription activation by association with both the TREX-2 and the SAGA complexes. At the promoters, SAGA is required for recruitment of the basal transcription machinery. It influences RNA polymerase II transcriptional activity through different activities such as TBP interaction and promoter selectivity, interaction with transcription activators, and chromatin modification through histone acetylation and deubiquitination. Within the SAGA complex, participates in a subcomplex required for deubiquitination of H2B and for the maintenance of steady-state H3 methylation levels. The TREX-2 complex functions in docking export-competent ribonucleoprotein particles (mRNPs) to the nuclear entrance of the nuclear pore complex (nuclear basket). TREX-2 participates in mRNA export and accurate chromatin positioning in the nucleus by tethering genes to the nuclear periphery. May also be involved in cytoplasmic mRNA decay by interaction with components of P-bodies. The chain is Transcription and mRNA export factor SUS1 from Eremothecium gossypii (strain ATCC 10895 / CBS 109.51 / FGSC 9923 / NRRL Y-1056) (Yeast).